A 119-amino-acid chain; its full sequence is Ribonuclease P protein component (119 aa).

The protein belongs to the RnpA family. In terms of assembly, consists of a catalytic RNA component (M1 or rnpB) and a protein subunit.

It catalyses the reaction Endonucleolytic cleavage of RNA, removing 5'-extranucleotides from tRNA precursor.. In terms of biological role, RNaseP catalyzes the removal of the 5'-leader sequence from pre-tRNA to produce the mature 5'-terminus. It can also cleave other RNA substrates such as 4.5S RNA. The protein component plays an auxiliary but essential role in vivo by binding to the 5'-leader sequence and broadening the substrate specificity of the ribozyme. This is Ribonuclease P protein component from Sodalis glossinidius (strain morsitans).